The primary structure comprises 119 residues: Large ribosomal subunit protein bL20 (119 aa).

It belongs to the bacterial ribosomal protein bL20 family.

In terms of biological role, binds directly to 23S ribosomal RNA and is necessary for the in vitro assembly process of the 50S ribosomal subunit. It is not involved in the protein synthesizing functions of that subunit. The sequence is that of Large ribosomal subunit protein bL20 from Afipia carboxidovorans (strain ATCC 49405 / DSM 1227 / KCTC 32145 / OM5) (Oligotropha carboxidovorans).